A 477-amino-acid polypeptide reads, in one-letter code: ETS translocation variant 1 (477 aa).

Ser94 is modified (phosphoserine). The interval 128-178 (PQVGMRPSNPPTPSSTPVSPLHHASPNSAHTSKPDRAFPAHLPPSQPIQDS) is disordered. A phosphoserine; by RPS6KA1 and RPS6KA5 mark is found at Ser191 and Ser216. A Glycyl lysine isopeptide (Lys-Gly) (interchain with G-Cter in SUMO2) cross-link involves residue Lys317. Residues 335-415 (LQLWQFLVAL…AGERYVYKFV (81 aa)) constitute a DNA-binding region (ETS).

Belongs to the ETS family. Sumoylated. Post-translationally, phosphorylated at Ser-191 and Ser-216 by RPS6KA1 and RPS6KA5; phosphorylation activates transcriptional activity.

Its subcellular location is the nucleus. Functionally, transcriptional activator that binds to DNA sequences containing the consensus pentanucleotide 5'-CGGA[AT]-3'. Required for olfactory dopaminergic neuron differentiation; may directly activate expression of tyrosine hydroxylase (TH). This Bos taurus (Bovine) protein is ETS translocation variant 1 (ETV1).